Here is a 156-residue protein sequence, read N- to C-terminus: Bursicon (156 aa).

Residues 1–26 form the signal peptide; it reads MYALDFLFIAFVYFAACHIQEKPVRA. Cystine bridges form between Cys-37–Cys-86, Cys-51–Cys-100, Cys-61–Cys-121, Cys-65–Cys-123, and Cys-83–Cys-126. The CTCK domain occupies 37-127; it reads CQMTPVIHIL…PLECMCRPCG (91 aa).

In terms of assembly, heterodimer of burs and pburs.

It is found in the secreted. Its function is as follows. Final heterodimeric neurohormone released at the end of the molting cycle, involved in the sclerotization (tanning) of the insect cuticle, melanization and wing spreading. The sequence is that of Bursicon from Manduca sexta (Tobacco hawkmoth).